Here is a 122-residue protein sequence, read N- to C-terminus: Large ribosomal subunit protein uL14 (122 aa).

Belongs to the universal ribosomal protein uL14 family. Part of the 50S ribosomal subunit. Forms a cluster with proteins L3 and L19. In the 70S ribosome, L14 and L19 interact and together make contacts with the 16S rRNA in bridges B5 and B8.

In terms of biological role, binds to 23S rRNA. Forms part of two intersubunit bridges in the 70S ribosome. The chain is Large ribosomal subunit protein uL14 from Phytoplasma mali (strain AT).